The primary structure comprises 287 residues: Protease HtpX (287 aa).

A run of 2 helical transmembrane segments spans residues 4-24 (IMLF…VLNI) and 36-56 (LSGL…ISLM). Residue histidine 143 coordinates Zn(2+). Glutamate 144 is an active-site residue. Residue histidine 147 coordinates Zn(2+). 2 consecutive transmembrane segments (helical) span residues 158 to 178 (LMQG…ANIV) and 192 to 212 (MVYF…ASFI). Position 221 (glutamate 221) interacts with Zn(2+).

Belongs to the peptidase M48B family. Zn(2+) is required as a cofactor.

It localises to the cell inner membrane. The protein is Protease HtpX of Vibrio parahaemolyticus serotype O3:K6 (strain RIMD 2210633).